We begin with the raw amino-acid sequence, 68 residues long: ATP synthase F(0) complex subunit 8 (68 aa).

The chain crosses the membrane as a helical span at residues 8 to 24 (VWPTIITSMLLTLFLLM). The residue at position 54 (lysine 54) is an N6-acetyllysine; alternate. Residue lysine 54 is modified to N6-succinyllysine; alternate. Position 57 is an N6-acetyllysine (lysine 57).

Belongs to the ATPase protein 8 family. Component of the ATP synthase complex composed at least of ATP5F1A/subunit alpha, ATP5F1B/subunit beta, ATP5MC1/subunit c (homooctomer), MT-ATP6/subunit a, MT-ATP8/subunit 8, ATP5ME/subunit e, ATP5MF/subunit f, ATP5MG/subunit g, ATP5MK/subunit k, ATP5MJ/subunit j, ATP5F1C/subunit gamma, ATP5F1D/subunit delta, ATP5F1E/subunit epsilon, ATP5PF/subunit F6, ATP5PB/subunit b, ATP5PD/subunit d, ATP5PO/subunit OSCP. ATP synthase complex consists of a soluble F(1) head domain (subunits alpha(3) and beta(3)) - the catalytic core - and a membrane F(0) domain - the membrane proton channel (subunits c, a, 8, e, f, g, k and j). These two domains are linked by a central stalk (subunits gamma, delta, and epsilon) rotating inside the F1 region and a stationary peripheral stalk (subunits F6, b, d, and OSCP). Interacts with PRICKLE3.

It localises to the mitochondrion membrane. Its function is as follows. Subunit 8, of the mitochondrial membrane ATP synthase complex (F(1)F(0) ATP synthase or Complex V) that produces ATP from ADP in the presence of a proton gradient across the membrane which is generated by electron transport complexes of the respiratory chain. ATP synthase complex consist of a soluble F(1) head domain - the catalytic core - and a membrane F(1) domain - the membrane proton channel. These two domains are linked by a central stalk rotating inside the F(1) region and a stationary peripheral stalk. During catalysis, ATP synthesis in the catalytic domain of F(1) is coupled via a rotary mechanism of the central stalk subunits to proton translocation. In vivo, can only synthesize ATP although its ATP hydrolase activity can be activated artificially in vitro. Part of the complex F(0) domain. This Symphalangus syndactylus (Siamang) protein is ATP synthase F(0) complex subunit 8.